The sequence spans 156 residues: Cyanate hydratase (156 aa).

Catalysis depends on residues arginine 96, glutamate 99, and serine 122.

This sequence belongs to the cyanase family.

It catalyses the reaction cyanate + hydrogencarbonate + 3 H(+) = NH4(+) + 2 CO2. In terms of biological role, catalyzes the reaction of cyanate with bicarbonate to produce ammonia and carbon dioxide. This chain is Cyanate hydratase, found in Pseudomonas entomophila (strain L48).